We begin with the raw amino-acid sequence, 306 residues long: Homoserine kinase (306 aa).

Residue 84-94 coordinates ATP; sequence PAGLGLGSSGA.

Belongs to the GHMP kinase family. Homoserine kinase subfamily.

It is found in the cytoplasm. The enzyme catalyses L-homoserine + ATP = O-phospho-L-homoserine + ADP + H(+). The protein operates within amino-acid biosynthesis; L-threonine biosynthesis; L-threonine from L-aspartate: step 4/5. In terms of biological role, catalyzes the ATP-dependent phosphorylation of L-homoserine to L-homoserine phosphate. The polypeptide is Homoserine kinase (Sulfolobus acidocaldarius (strain ATCC 33909 / DSM 639 / JCM 8929 / NBRC 15157 / NCIMB 11770)).